Here is a 134-residue protein sequence, read N- to C-terminus: Small ribosomal subunit protein uS8 (134 aa).

The protein belongs to the universal ribosomal protein uS8 family. As to quaternary structure, part of the 30S ribosomal subunit. Contacts proteins S5 and S12.

Its function is as follows. One of the primary rRNA binding proteins, it binds directly to 16S rRNA central domain where it helps coordinate assembly of the platform of the 30S subunit. This chain is Small ribosomal subunit protein uS8, found in Nitratiruptor sp. (strain SB155-2).